The primary structure comprises 90 residues: Co-chaperonin GroES (90 aa).

This sequence belongs to the GroES chaperonin family. In terms of assembly, heptamer of 7 subunits arranged in a ring. Interacts with the chaperonin GroEL.

It is found in the cytoplasm. Together with the chaperonin GroEL, plays an essential role in assisting protein folding. The GroEL-GroES system forms a nano-cage that allows encapsulation of the non-native substrate proteins and provides a physical environment optimized to promote and accelerate protein folding. GroES binds to the apical surface of the GroEL ring, thereby capping the opening of the GroEL channel. The polypeptide is Co-chaperonin GroES (Bacteroides thetaiotaomicron (strain ATCC 29148 / DSM 2079 / JCM 5827 / CCUG 10774 / NCTC 10582 / VPI-5482 / E50)).